Reading from the N-terminus, the 522-residue chain is Putative malate dehydrogenase 1B (522 aa).

The disordered stretch occupies residues 495–522; it reads EETEKSSSEDTPEAAAAAVSTGDETVPS.

This sequence belongs to the LDH/MDH superfamily. MDH type 2 family.

This Branchiostoma floridae (Florida lancelet) protein is Putative malate dehydrogenase 1B (MDH1B).